Reading from the N-terminus, the 459-residue chain is Carbonic anhydrase 9 (459 aa).

The first 37 residues, M1 to P37, serve as a signal peptide directing secretion. Residues Q38–D112 form a proteoglycan-like (PG) region. The Extracellular portion of the chain corresponds to Q38–D414. The interval R42–P154 is disordered. Residues G55–L95 show a composition bias toward acidic residues. The segment covering P96–D112 has biased composition (basic and acidic residues). T115 carries an O-linked (GlcNAc...) threonine glycan. Residues A129 to H140 show a composition bias toward basic and acidic residues. Positions Q138–P391 are catalytic. The 252-residue stretch at S139 to F390 folds into the Alpha-carbonic anhydrase domain. A disulfide bridge links C156 with C336. Catalysis depends on H200, which acts as the Proton donor/acceptor. H226, H228, and H251 together coordinate Zn(2+). Residue T332–T333 coordinates substrate. N346 is a glycosylation site (N-linked (GlcNAc...) asparagine). Residues I415–M435 traverse the membrane as a helical segment. The Cytoplasmic portion of the chain corresponds to R436–A459. Y449 is modified (phosphotyrosine).

The protein belongs to the alpha-carbonic anhydrase family. As to quaternary structure, forms oligomers linked by disulfide bonds. The cofactor is Zn(2+). In terms of processing, asn-346 bears high-mannose type glycan structures. In terms of tissue distribution, expressed primarily in carcinoma cells lines. Expression is restricted to very few normal tissues and the most abundant expression is found in the epithelial cells of gastric mucosa.

The protein resides in the nucleus. The protein localises to the nucleolus. It is found in the cell membrane. Its subcellular location is the cell projection. It localises to the microvillus membrane. The enzyme catalyses hydrogencarbonate + H(+) = CO2 + H2O. Inhibited by coumarins, saccharin, sulfonamide derivatives such as acetazolamide (AZA) and Foscarnet (phosphonoformate trisodium salt). Its function is as follows. Catalyzes the interconversion between carbon dioxide and water and the dissociated ions of carbonic acid (i.e. bicarbonate and hydrogen ions). This is Carbonic anhydrase 9 (CA9) from Homo sapiens (Human).